Consider the following 294-residue polypeptide: MEDSMDMDMSPLRPQNYLFGCELKADKDYHFKVDNDENEHQLSLRTVSLGAGAKDELHIVEAEAMNYEGSPIKVTLATLKMSVQPTVSLGGFEITPPVVLRLKCGSGPVHISGQHLVAVEEDAESEDEEEEDVKLLSISGKRSAPGGGSKVPQKKVKLAADEDDDDDDEEDDDEDDDDDDFDDEEAEEKAPVKKSIRDTPAKNAQKSNQNGKDSKPSSTPRSKGQESFKKQEKTPKTPKGPSSVEDIKAKMQASIEKGGSLPKVEAKFINYVKNCFRMTDQEAIQDLWQWRKSL.

At Met-1 the chain carries N-acetylmethionine. The necessary for interaction with APEX1 stretch occupies residues 1-117 (MEDSMDMDMS…PVHISGQHLV (117 aa)). The required for interaction with SENP3 stretch occupies residues 1-186 (MEDSMDMDMS…DDDDFDDEEA (186 aa)). Ser-4 is modified (phosphoserine; by PLK1 and PLK2). Phosphoserine is present on Ser-10. Lys-27 participates in a covalent cross-link: Glycyl lysine isopeptide (Lys-Gly) (interchain with G-Cter in SUMO2). An N6-acetyllysine; alternate modification is found at Lys-32. Lys-32 participates in a covalent cross-link: Glycyl lysine isopeptide (Lys-Gly) (interchain with G-Cter in SUMO1); alternate. Residue Lys-32 forms a Glycyl lysine isopeptide (Lys-Gly) (interchain with G-Cter in SUMO2); alternate linkage. Phosphoserine is present on Ser-43. The residue at position 67 (Tyr-67) is a Phosphotyrosine. A Phosphoserine modification is found at Ser-70. 2 positions are modified to phosphothreonine: Thr-75 and Thr-95. Residues 120-132 (EEDAESEDEEEED) show a composition bias toward acidic residues. Residues 120–247 (EEDAESEDEE…PKGPSSVEDI (128 aa)) are disordered. Phosphoserine; by CDK2 is present on Ser-125. Phosphoserine occurs at positions 137 and 139. A Glycyl lysine isopeptide (Lys-Gly) (interchain with G-Cter in SUMO2) cross-link involves residue Lys-141. An N6-acetyllysine; alternate modification is found at Lys-150. Lys-150 is covalently cross-linked (Glycyl lysine isopeptide (Lys-Gly) (interchain with G-Cter in SUMO2); alternate). The Nuclear localization signal motif lies at 152 to 157 (PQKKVK). An N6-acetyllysine modification is found at Lys-154. Positions 161–187 (DEDDDDDDEEDDDEDDDDDDFDDEEAE) are enriched in acidic residues. Residues 187–215 (EEKAPVKKSIRDTPAKNAQKSNQNGKDSK) form an interaction with NOP2 region. Positions 188–200 (EKAPVKKSIRDTP) are enriched in basic and acidic residues. The Nuclear localization signal signature appears at 191 to 197 (PVKKSIR). Residue Thr-199 is modified to Phosphothreonine; by CDK1, CDK2 and CDK6. The span at 202–222 (KNAQKSNQNGKDSKPSSTPRS) shows a compositional bias: polar residues. Ser-207 is modified (ADP-ribosylserine). At Lys-212 the chain carries N6-acetyllysine. Lys-215 participates in a covalent cross-link: Glycyl lysine isopeptide (Lys-Gly) (interchain with G-Cter in SUMO2). The residue at position 219 (Thr-219) is a Phosphothreonine; by CDK1. Over residues 223–235 (KGQESFKKQEKTP) the composition is skewed to basic and acidic residues. Ser-227 carries the post-translational modification Phosphoserine. Position 229 is an N6-acetyllysine (Lys-229). Residue Lys-230 is modified to N6-acetyllysine; alternate. Lys-230 is covalently cross-linked (Glycyl lysine isopeptide (Lys-Gly) (interchain with G-Cter in SUMO); alternate). A phosphothreonine; by CDK1 mark is found at Thr-234 and Thr-237. Phosphoserine is present on residues Ser-242 and Ser-243. Residues 243–294 (SVEDIKAKMQASIEKGGSLPKVEAKFINYVKNCFRMTDQEAIQDLWQWRKSL) are required for nucleolar localization. Residue Lys-248 forms a Glycyl lysine isopeptide (Lys-Gly) (interchain with G-Cter in SUMO1); alternate linkage. Residues Lys-248 and Lys-250 each participate in a glycyl lysine isopeptide (Lys-Gly) (interchain with G-Cter in SUMO2); alternate cross-link. Lys-250 carries the post-translational modification N6-acetyllysine; alternate. Ser-254 carries the post-translational modification Phosphoserine. An N6-acetyllysine; alternate modification is found at Lys-257. Residue Lys-257 forms a Glycyl lysine isopeptide (Lys-Gly) (interchain with G-Cter in SUMO1); alternate linkage. Lys-257 participates in a covalent cross-link: Glycyl lysine isopeptide (Lys-Gly) (interchain with G-Cter in SUMO2); alternate. Lys-257 carries the N6-acetyllysine modification. Residue Ser-260 is modified to Phosphoserine. Glycyl lysine isopeptide (Lys-Gly) (interchain with G-Cter in SUMO2); alternate cross-links involve residues Lys-263, Lys-267, and Lys-273. A Glycyl lysine isopeptide (Lys-Gly) (interchain with G-Cter in SUMO); alternate cross-link involves residue Lys-263. Residues Lys-267 and Lys-273 each carry the N6-acetyllysine; alternate modification. Lys-267 participates in a covalent cross-link: Glycyl lysine isopeptide (Lys-Gly) (interchain with G-Cter in SUMO1); alternate. The residue at position 267 (Lys-267) is an N6-succinyllysine; alternate. Phosphothreonine is present on Thr-279. Lys-292 is subject to N6-acetyllysine.

Belongs to the nucleoplasmin family. Decamer formed by two pentameric rings associated in a head-to-head fashion. Disulfide-linked dimers under certain conditions. The SWAP complex consists of NPM1, NCL, PARP1 and SWAP70. Interacts with NSUN2 and SENP3. Interacts with the methylated form of RPS10. Interacts (via N-terminal domain) with APEX1; the interaction is RNA-dependent and decreases in hydrogen peroxide-damaged cells. Interacts with isoform 1 of NEK2. Interacts with ROCK2 and BRCA2. Interacts with RPGR. Interacts with CENPW. Interacts with EIF2AK2/PKR. Interacts with CEBPA (isoform 4). Interacts with DDX31; this interaction prevents interaction between NPM1 and HDM2. Interacts with MYC; competitive with NOP53. Interacts with NOP53; the interaction is direct and competitive with MYC. Interacts with LRRC34. Interacts with RRP1B. Interacts with NPM3. Interacts with ALKBH2. Interacts with TTF1 (via C-terminal region). Interacts with NOP2. Interacts with ARID3C (via REKLES DOMAIN); the interaction mediates ARID3C nuclear shuttling. In terms of assembly, (Microbial infection) Interacts with hepatitis delta virus S-HDAg. As to quaternary structure, (Microbial infection) Interacts with HTLV1 Rex protein (via N-terminal nuclear localization signal). Post-translationally, acetylated at C-terminal lysine residues, thereby increasing affinity to histones. In terms of processing, ADP-ribosylated. Phosphorylated at Ser-4 by PLK1 and PLK2. Phosphorylation at Ser-4 by PLK2 in S phase is required for centriole duplication and is sufficient to trigger centriole replication. Phosphorylation at Ser-4 by PLK1 takes place during mitosis. Phosphorylated by CDK2 at Ser-125 and Thr-199. Phosphorylation at Thr-199 may trigger initiation of centrosome duplication. Phosphorylated by CDK1 at Thr-199, Thr-219, Thr-234 and Thr-237 during cell mitosis. When these four sites are phosphorated, RNA-binding activity seem to be abolished. May be phosphorylated at Ser-70 by NEK2. The Thr-199 phosphorylated form has higher affinity for ROCK2. CDK6 triggers Thr-199 phosphorylation when complexed to Kaposi's sarcoma herpesvirus (KSHV) V-cyclin, leading to viral reactivation by reducing viral LANA levels. Post-translationally, sumoylated by ARF. In terms of processing, ubiquitinated. Ubiquitination leads to proteasomal degradation. Deubiquitinated by USP36.

It localises to the nucleus. Its subcellular location is the nucleolus. It is found in the nucleoplasm. The protein localises to the cytoplasm. The protein resides in the cytoskeleton. It localises to the microtubule organizing center. Its subcellular location is the centrosome. Functionally, involved in diverse cellular processes such as ribosome biogenesis, centrosome duplication, protein chaperoning, histone assembly, cell proliferation, and regulation of tumor suppressors p53/TP53 and ARF. Binds ribosome presumably to drive ribosome nuclear export. Associated with nucleolar ribonucleoprotein structures and bind single-stranded nucleic acids. Acts as a chaperonin for the core histones H3, H2B and H4. Stimulates APEX1 endonuclease activity on apurinic/apyrimidinic (AP) double-stranded DNA but inhibits APEX1 endonuclease activity on AP single-stranded RNA. May exert a control of APEX1 endonuclease activity within nucleoli devoted to repair AP on rDNA and the removal of oxidized rRNA molecules. In concert with BRCA2, regulates centrosome duplication. Regulates centriole duplication: phosphorylation by PLK2 is able to trigger centriole replication. Negatively regulates the activation of EIF2AK2/PKR and suppresses apoptosis through inhibition of EIF2AK2/PKR autophosphorylation. Antagonizes the inhibitory effect of ATF5 on cell proliferation and relieves ATF5-induced G2/M blockade. In complex with MYC enhances the transcription of MYC target genes. May act as chaperonin or cotransporter in the nucleolar localization of transcription termination factor TTF1. The chain is Nucleophosmin from Homo sapiens (Human).